The chain runs to 352 residues: C-C chemokine receptor type 5 (352 aa).

Over 1–30 the chain is Extracellular; sequence MDYQVSSPTYDIDYYTSGPCQKINVKQIAA. Position 3 is a sulfotyrosine (Y3). O-linked (GalNAc...) serine glycans are attached at residues S6 and S7. Sulfotyrosine is present on residues Y10, Y14, and Y15. Disulfide bonds link C20/C269 and C101/C178. A helical membrane pass occupies residues 31 to 58; it reads RLLPPLYSLVFIFGFVGNMLVILILINC. At 59-68 the chain is on the cytoplasmic side; the sequence is KRLKSMTDIY. The helical transmembrane segment at 69-89 threads the bilayer; the sequence is LLNLAISDLFFLLTVPFWAHY. Topologically, residues 90–102 are extracellular; the sequence is AAAQWDFGNTMCQ. The chain crosses the membrane as a helical span at residues 103–124; it reads LLTGLYFIGFFSGIFFIILLTI. The Cytoplasmic portion of the chain corresponds to 125-141; the sequence is DRYLAIVHAVFALKART. A helical transmembrane segment spans residues 142–166; sequence VTFGVVTSVITWVVAVFASLPGIIF. The Extracellular portion of the chain corresponds to 167–198; that stretch reads TRSQKEGLHYTCSSHFPYSQYQFWKNFQTLKI. Residues 199–218 traverse the membrane as a helical segment; sequence VILGLVLPLLVMVICYSGIL. Over 219 to 235 the chain is Cytoplasmic; the sequence is KTLLRCRNEKKRHRAVR. The chain crosses the membrane as a helical span at residues 236–260; it reads LIFTIMIVYFLFWAPYNIVLLLNTF. Over 261–277 the chain is Extracellular; the sequence is QEFFGLNNCSSSNRLDQ. The helical transmembrane segment at 278–301 threads the bilayer; it reads AMQVTETLGMTHCCINPIIYAFVG. Residues 302 to 352 lie on the Cytoplasmic side of the membrane; sequence EKFRNYLLVFFQKHIAKHFCKCCSIFQQEAPERASSVYTRSTGEQEISVGL. 3 S-palmitoyl cysteine lipidation sites follow: C321, C323, and C324. Phosphoserine; by BARK1 is present on residues S336, S337, S342, and S349.

This sequence belongs to the G-protein coupled receptor 1 family. Interacts with PRAF2. Efficient ligand binding to CCL3/MIP-1alpha and CCL4/MIP-1beta requires sulfation, O-glycosylation and sialic acid modifications. Glycosylation on Ser-6 is required for efficient binding of CCL4. Interacts with GRK2. Interacts with ARRB1 and ARRB2. Interacts with CNIH4. Interacts with S100A4; this interaction stimulates T-lymphocyte chemotaxis. In terms of processing, sulfated on at least 2 of the N-terminal tyrosines. Sulfation is required for efficient binding of the chemokines, CCL3 and CCL4. Palmitoylation in the C-terminal is important for cell surface expression. Post-translationally, phosphorylation on serine residues in the C-terminal is stimulated by binding CC chemokines especially by APO-RANTES. In terms of processing, O-glycosylated, but not N-glycosylated. Ser-6 appears to be the major site even if Ser-7 may be also O-glycosylated. Also sialylated glycans present which contribute to chemokine binding. Thr-16 and Ser-17 may also be glycosylated and, if so, with small moieties such as a T-antigen.

It localises to the cell membrane. Functionally, receptor for a number of inflammatory CC-chemokines including CCL3/MIP-1-alpha, CCL4/MIP-1-beta and RANTES and subsequently transduces a signal by increasing the intracellular calcium ion level. May play a role in the control of granulocytic lineage proliferation or differentiation. Participates in T-lymphocyte migration to the infection site by acting as a chemotactic receptor. This chain is C-C chemokine receptor type 5 (CCR5), found in Hylobates moloch (Silvery gibbon).